The sequence spans 403 residues: Adenylate cyclase (403 aa).

Over residues 1 to 16 (MSTEHTNTPRADSPQS) the composition is skewed to polar residues. Residues 1–37 (MSTEHTNTPRADSPQSAAEAVRGARQHAPAATPAESD) are disordered. Positions 31–60 (ATPAESDPILELAEAMEGPLRIPAHTPEAV) are pyruvate binding. The 110-residue stretch at 238 to 347 (AVGFADLVSY…PTVNMAARLT (110 aa)) folds into the Guanylate cyclase domain. Residues D243 and D287 each contribute to the Mg(2+) site.

It belongs to the adenylyl cyclase class-3 family. Homodimer. Mg(2+) serves as cofactor.

Its subcellular location is the cytoplasm. The catalysed reaction is ATP = 3',5'-cyclic AMP + diphosphate. With respect to regulation, pyruvate-stimulated. In terms of biological role, plays essential roles in regulation of cellular metabolism by catalyzing the synthesis of a second messenger, cAMP. The protein is Adenylate cyclase (cya) of Glutamicibacter nicotianae (Arthrobacter nicotianae).